A 363-amino-acid polypeptide reads, in one-letter code: Type-2 angiotensin II receptor (363 aa).

At 1 to 45 the chain is on the extracellular side; it reads MKDNFSFAATSRNITSSLPFDNLNATGTNESAFNCSHKPADKHLE. Asn4, Asn13, Asn24, Asn29, and Asn34 each carry an N-linked (GlcNAc...) asparagine glycan. 2 cysteine pairs are disulfide-bonded: Cys35–Cys290 and Cys117–Cys195. Residues 46–70 form a helical membrane-spanning segment; the sequence is AIPVLYYMIFVIGFAVNIVVVSLFC. The Cytoplasmic segment spans residues 71–80; the sequence is CQKGPKKVSS. Residues 81–104 form a helical membrane-spanning segment; that stretch reads IYIFNLAVADLLLLATLPLWATYY. Angiotensin II is bound by residues Tyr103 and Tyr104. The Extracellular portion of the chain corresponds to 105–114; that stretch reads SYRYDWLFGP. The chain crosses the membrane as a helical span at residues 115-140; that stretch reads VMCKVFGSFLTLNMFASIFFITCMSV. Residues 141–159 are Cytoplasmic-facing; that stretch reads DRYQSVIYPFLSQRRNPWQ. A helical membrane pass occupies residues 160 to 181; it reads ASYVVPLVWCMACLSSLPTFYF. Angiotensin II is bound by residues Arg182, Tyr204, and Lys215. Residues 182-206 are Extracellular-facing; that stretch reads RDVRTIEYLGVNACIMAFPPEKYAQ. A helical transmembrane segment spans residues 207-232; that stretch reads WSAGIALMKNILGFIIPLIFIATCYF. Over 233 to 257 the chain is Cytoplasmic; the sequence is GIRKHLLKTNSYGKNRITRDQVLKM. A helical membrane pass occupies residues 258-281; the sequence is AAAVVLAFIICWLPFHVLTFLDAL. Asp279 contacts angiotensin II. Over 282–294 the chain is Extracellular; it reads TWMGIINSCEVIA. The helical transmembrane segment at 295 to 320 threads the bilayer; sequence VIDLALPFAILLGFTNSCVNPFLYCF. Angiotensin II is bound at residue Asp297. Residues 321–363 are Cytoplasmic-facing; sequence VGNRFQQKLRSVFRVPITWLQGKRETMSCRKSSSLREMDTFVS. The helix VIII stretch occupies residues 324 to 333; that stretch reads RFQQKLRSVF. Ser354 carries the post-translational modification Phosphoserine; by PKC.

Belongs to the G-protein coupled receptor 1 family. As to quaternary structure, interacts with MTUS1. As to expression, abundant expression in fetal tissues, immature brain, skin wound and atretic ovarian follicles.

The protein localises to the cell membrane. In terms of biological role, receptor for angiotensin II, a vasoconstricting peptide. Signals primarily via a non-canonical G-protein- and beta-arrestin independent pathways. Cooperates with MTUS1 to inhibit ERK2 activation and cell proliferation. This is Type-2 angiotensin II receptor from Rattus norvegicus (Rat).